Consider the following 25-residue polypeptide: Hemocyanin subunit 3 (25 aa).

Belongs to the tyrosinase family. Hemocyanin subfamily. As to expression, hemolymph.

Its subcellular location is the secreted. The protein localises to the extracellular space. In terms of biological role, hemocyanins are copper-containing oxygen carriers occurring freely dissolved in the hemolymph of many mollusks and arthropods. The chain is Hemocyanin subunit 3 from Maja squinado (Mediterranean spider crab).